Here is a 144-residue protein sequence, read N- to C-terminus: Small ribosomal subunit protein bS6 (144 aa).

The disordered stretch occupies residues 97 to 144 (DTEQSLIMKSKDEKGDKPERSERRRRDDEEVDAAPAATDTDGDNAEAA). The segment covering 105–124 (KSKDEKGDKPERSERRRRDD) has biased composition (basic and acidic residues).

Belongs to the bacterial ribosomal protein bS6 family.

Binds together with bS18 to 16S ribosomal RNA. The sequence is that of Small ribosomal subunit protein bS6 from Xanthomonas campestris pv. campestris (strain B100).